A 430-amino-acid polypeptide reads, in one-letter code: Histidinol dehydrogenase (430 aa).

Residues Tyr-124, Gln-185, and Asn-208 each coordinate NAD(+). Substrate contacts are provided by Ser-233, Gln-255, and His-258. Residues Gln-255 and His-258 each contribute to the Zn(2+) site. Catalysis depends on proton acceptor residues Glu-324 and His-325. Residues His-325, Asp-358, Glu-412, and His-418 each contribute to the substrate site. Position 358 (Asp-358) interacts with Zn(2+). Position 418 (His-418) interacts with Zn(2+).

Belongs to the histidinol dehydrogenase family. Zn(2+) is required as a cofactor.

It catalyses the reaction L-histidinol + 2 NAD(+) + H2O = L-histidine + 2 NADH + 3 H(+). It functions in the pathway amino-acid biosynthesis; L-histidine biosynthesis; L-histidine from 5-phospho-alpha-D-ribose 1-diphosphate: step 9/9. Functionally, catalyzes the sequential NAD-dependent oxidations of L-histidinol to L-histidinaldehyde and then to L-histidine. The chain is Histidinol dehydrogenase from Leptospira biflexa serovar Patoc (strain Patoc 1 / Ames).